The following is a 208-amino-acid chain: ATP phosphoribosyltransferase (208 aa).

Belongs to the ATP phosphoribosyltransferase family. Short subfamily. As to quaternary structure, heteromultimer composed of HisG and HisZ subunits.

The protein resides in the cytoplasm. It catalyses the reaction 1-(5-phospho-beta-D-ribosyl)-ATP + diphosphate = 5-phospho-alpha-D-ribose 1-diphosphate + ATP. Its pathway is amino-acid biosynthesis; L-histidine biosynthesis; L-histidine from 5-phospho-alpha-D-ribose 1-diphosphate: step 1/9. Catalyzes the condensation of ATP and 5-phosphoribose 1-diphosphate to form N'-(5'-phosphoribosyl)-ATP (PR-ATP). Has a crucial role in the pathway because the rate of histidine biosynthesis seems to be controlled primarily by regulation of HisG enzymatic activity. The sequence is that of ATP phosphoribosyltransferase from Hydrogenovibrio crunogenus (strain DSM 25203 / XCL-2) (Thiomicrospira crunogena).